A 340-amino-acid chain; its full sequence is Phosphate acyltransferase (340 aa).

This sequence belongs to the PlsX family. Homodimer. Probably interacts with PlsY.

It is found in the cytoplasm. The enzyme catalyses a fatty acyl-[ACP] + phosphate = an acyl phosphate + holo-[ACP]. It functions in the pathway lipid metabolism; phospholipid metabolism. Its function is as follows. Catalyzes the reversible formation of acyl-phosphate (acyl-PO(4)) from acyl-[acyl-carrier-protein] (acyl-ACP). This enzyme utilizes acyl-ACP as fatty acyl donor, but not acyl-CoA. This is Phosphate acyltransferase from Nostoc punctiforme (strain ATCC 29133 / PCC 73102).